The following is a 28-amino-acid chain: Mast cell degranulating peptide (28 aa).

2 disulfide bridges follow: C2/C18 and C4/C22.

Expressed by the venom gland.

The protein resides in the secreted. Its function is as follows. Mast cell degranulating peptide. This is Mast cell degranulating peptide from Bombus pensylvanicus (American bumblebee).